The primary structure comprises 72 residues: Translation initiation factor IF-1 (72 aa).

Residues 1–72 (MAKADVIEVE…TKGRITFRFK (72 aa)) form the S1-like domain.

Belongs to the IF-1 family. In terms of assembly, component of the 30S ribosomal translation pre-initiation complex which assembles on the 30S ribosome in the order IF-2 and IF-3, IF-1 and N-formylmethionyl-tRNA(fMet); mRNA recruitment can occur at any time during PIC assembly.

It localises to the cytoplasm. Its function is as follows. One of the essential components for the initiation of protein synthesis. Stabilizes the binding of IF-2 and IF-3 on the 30S subunit to which N-formylmethionyl-tRNA(fMet) subsequently binds. Helps modulate mRNA selection, yielding the 30S pre-initiation complex (PIC). Upon addition of the 50S ribosomal subunit IF-1, IF-2 and IF-3 are released leaving the mature 70S translation initiation complex. The polypeptide is Translation initiation factor IF-1 (Limosilactobacillus reuteri (strain DSM 20016) (Lactobacillus reuteri)).